The sequence spans 132 residues: Protein FAM174C (132 aa).

A signal peptide spans 1-26 (MGPRVLQPPLLLLLLALLLAALPCGA). Residues 34–66 (PAQVTLSPPPAVTNGSQPGAPHNSTHTRPPGAS) form a disordered region. Residues 46–60 (TNGSQPGAPHNSTHT) show a composition bias toward polar residues. An N-linked (GlcNAc...) asparagine glycan is attached at N47. The helical transmembrane segment at 73–93 (SFYVILGFCGLTALYFLIRAF) threads the bilayer. A Phosphothreonine modification is found at T113. The interval 113-132 (TEMASLDSDEETVFESRNLR) is disordered. 2 positions are modified to phosphoserine: S117 and S120.

Belongs to the FAM174 family.

Its subcellular location is the membrane. The polypeptide is Protein FAM174C (Homo sapiens (Human)).